We begin with the raw amino-acid sequence, 831 residues long: Maltodextrin phosphorylase (831 aa).

K592 is modified (N6-(pyridoxal phosphate)lysine).

It belongs to the glycogen phosphorylase family. In terms of assembly, trimer (at 25 degrees Celsius). Requires pyridoxal 5'-phosphate as cofactor.

The enzyme catalyses [(1-&gt;4)-alpha-D-glucosyl](n) + phosphate = [(1-&gt;4)-alpha-D-glucosyl](n-1) + alpha-D-glucose 1-phosphate. Phosphorylase is an important allosteric enzyme in carbohydrate metabolism. Catalyzes the phospholytic cleavage of maltodextrins with a minimal chain length of five glucose residues to yield glucose-1-phosphate. Low activity with tetraose and no activity with triose and maltose. Long maltodextrins (8 to 15 glucose units), amylose and starch are not as good substrates as maltoheptaose. The chain is Maltodextrin phosphorylase (malP) from Thermococcus litoralis (strain ATCC 51850 / DSM 5473 / JCM 8560 / NS-C).